Here is a 106-residue protein sequence, read N- to C-terminus: Putative regulatory protein MalR (106 aa).

The HTH hxlR-type domain occupies 12–106 (CSIEYTLSFM…NLMHKWGQEN (95 aa)).

In terms of biological role, potential regulator of the malBH genes. The chain is Putative regulatory protein MalR (malR) from Fusobacterium mortiferum.